Reading from the N-terminus, the 418-residue chain is 6-methylpretetramide 4-monooxygenase (418 aa).

FAD contacts are provided by residues D15–R44 and W289–D299.

Belongs to the PheA/TfdB FAD monooxygenase family. It depends on FAD as a cofactor.

The catalysed reaction is 6-methylpretetramide + NADPH + O2 + 2 H(+) = 4-hydroxy-6-methylpretetramide + NADP(+) + H2O. It participates in antibiotic biosynthesis; oxytetracycline biosynthesis. Functionally, involved in the biosynthesis of the tetracycline antibiotic, oxytetracycline. Catalyzes the C-4 hydroxylation of 6-methylpretetramide to yield the intermediate 4-hydroxyl-6-methylpretetramid, which is subsequently hydroxylated by OxyL to yield 4-keto-anhydrotetracycline. OxyE serves as the ancillary enzyme to assist OxyL in the hydroxylation of C-4. This chain is 6-methylpretetramide 4-monooxygenase, found in Streptomyces rimosus.